Reading from the N-terminus, the 760-residue chain is 5-methyltetrahydropteroyltriglutamate--homocysteine methyltransferase (760 aa).

5-methyltetrahydropteroyltri-L-glutamate is bound by residues 17–20 and Lys118; that span reads RELK. L-homocysteine is bound by residues 436–438 and Glu489; that span reads IGS. Residues 436–438 and Glu489 each bind L-methionine; that span reads IGS. 5-methyltetrahydropteroyltri-L-glutamate is bound by residues 520–521 and Trp566; that span reads RC. Residue Asp604 participates in L-homocysteine binding. L-methionine is bound at residue Asp604. Residue Glu610 coordinates 5-methyltetrahydropteroyltri-L-glutamate. Residues His646, Cys648, and Glu670 each contribute to the Zn(2+) site. His699 functions as the Proton donor in the catalytic mechanism. Cys731 contacts Zn(2+).

The protein belongs to the vitamin-B12 independent methionine synthase family. Zn(2+) is required as a cofactor.

The catalysed reaction is 5-methyltetrahydropteroyltri-L-glutamate + L-homocysteine = tetrahydropteroyltri-L-glutamate + L-methionine. Its pathway is amino-acid biosynthesis; L-methionine biosynthesis via de novo pathway; L-methionine from L-homocysteine (MetE route): step 1/1. Functionally, catalyzes the transfer of a methyl group from 5-methyltetrahydrofolate to homocysteine resulting in methionine formation. The polypeptide is 5-methyltetrahydropteroyltriglutamate--homocysteine methyltransferase (Vibrio harveyi (Beneckea harveyi)).